We begin with the raw amino-acid sequence, 903 residues long: Dual 3',5'-cyclic-AMP and -GMP phosphodiesterase 11A (903 aa).

GAF domains are found at residues 175-324 (DLTS…GIAI) and 356-512 (DLEK…GLGI). 3',5'-cyclic GMP is bound at residue Ser378. Residues 542-866 (SKTEVDKFKA…VKWEELDKKR (325 aa)) enclose the PDEase domain. The Proton donor role is filled by His618. His622, His658, Asp659, and Asp770 together coordinate a divalent metal cation. Positions 863–903 (DKKRQHDHGASVPASPCSAAEGSETGGVPCCSNNTPPTHVS) are disordered. The span at 893-903 (CSNNTPPTHVS) shows a compositional bias: polar residues.

Belongs to the cyclic nucleotide phosphodiesterase family. It depends on a divalent metal cation as a cofactor.

The protein resides in the cytoplasm. Its subcellular location is the cytosol. The catalysed reaction is 3',5'-cyclic GMP + H2O = GMP + H(+). It carries out the reaction 3',5'-cyclic AMP + H2O = AMP + H(+). Plays a role in signal transduction by regulating the intracellular concentration of cyclic nucleotides cAMP and cGMP. Catalyzes the hydrolysis of both cAMP and cGMP to 5'-AMP and 5'-GMP, respectively. The sequence is that of Dual 3',5'-cyclic-AMP and -GMP phosphodiesterase 11A (pde11a) from Takifugu rubripes (Japanese pufferfish).